The following is a 179-amino-acid chain: MNPPINFLPWRQQRRTAFLRFWLLMFVAPLLLAVGITLILRLTGSAEARIDAVLLQAEQQLARSLQITKPRLLEQQQLREQRSQRQRQRQFTRDWQSALEALAALLPEHAWLTTISWQQGTLEIKGLTTSITALNALETSLRQDASFHLNQRGATQQDAQGRWQFEYQLTRKVSDEHVL.

Residues Leu-19 to Ile-39 traverse the membrane as a helical segment.

It is found in the cell inner membrane. In terms of biological role, required for the use of extracellular DNA as a nutrient. The chain is DNA utilization protein HofN (hofN) from Escherichia coli (strain K12).